The primary structure comprises 358 residues: Peptide chain release factor 1 (358 aa).

Gln235 bears the N5-methylglutamine mark.

It belongs to the prokaryotic/mitochondrial release factor family. In terms of processing, methylated by PrmC. Methylation increases the termination efficiency of RF1.

The protein localises to the cytoplasm. Its function is as follows. Peptide chain release factor 1 directs the termination of translation in response to the peptide chain termination codons UAG and UAA. The protein is Peptide chain release factor 1 of Brachyspira hyodysenteriae (strain ATCC 49526 / WA1).